The chain runs to 192 residues: Glycerol-3-phosphate acyltransferase (192 aa).

5 helical membrane passes run 4-24 (MFWL…AILL), 54-74 (LAVL…VLAG), 80-100 (PSQQ…PLYF), 112-132 (AGVL…AWLL), and 154-174 (LLAW…LLIV).

This sequence belongs to the PlsY family. In terms of assembly, probably interacts with PlsX.

The protein resides in the cell inner membrane. It carries out the reaction an acyl phosphate + sn-glycerol 3-phosphate = a 1-acyl-sn-glycero-3-phosphate + phosphate. It functions in the pathway lipid metabolism; phospholipid metabolism. In terms of biological role, catalyzes the transfer of an acyl group from acyl-phosphate (acyl-PO(4)) to glycerol-3-phosphate (G3P) to form lysophosphatidic acid (LPA). This enzyme utilizes acyl-phosphate as fatty acyl donor, but not acyl-CoA or acyl-ACP. The chain is Glycerol-3-phosphate acyltransferase from Pseudomonas syringae pv. tomato (strain ATCC BAA-871 / DC3000).